The sequence spans 403 residues: Argininosuccinate synthase (403 aa).

10 to 18 provides a ligand contact to ATP; sequence AYSGGLDTS. 2 residues coordinate L-citrulline: Tyr-88 and Ser-93. Gly-118 lines the ATP pocket. The L-aspartate site is built by Thr-120, Asn-124, and Asp-125. Asn-124 provides a ligand contact to L-citrulline. Residues Arg-128, Ser-177, Ser-186, Glu-263, and Tyr-275 each coordinate L-citrulline.

Belongs to the argininosuccinate synthase family. Type 1 subfamily. As to quaternary structure, homotetramer.

The protein localises to the cytoplasm. It carries out the reaction L-citrulline + L-aspartate + ATP = 2-(N(omega)-L-arginino)succinate + AMP + diphosphate + H(+). It functions in the pathway amino-acid biosynthesis; L-arginine biosynthesis; L-arginine from L-ornithine and carbamoyl phosphate: step 2/3. This Clostridium perfringens (strain ATCC 13124 / DSM 756 / JCM 1290 / NCIMB 6125 / NCTC 8237 / Type A) protein is Argininosuccinate synthase.